Reading from the N-terminus, the 226-residue chain is ATP-dependent dethiobiotin synthetase BioD (226 aa).

14–19 (GIGKTF) contributes to the ATP binding site. T18 is a Mg(2+) binding site. K39 is a catalytic residue. S43 lines the substrate pocket. Residues D56, 117–120 (EGVG), 177–178 (NT), 206–208 (PHI), and N213 contribute to the ATP site. Residues D56 and E117 each contribute to the Mg(2+) site.

The protein belongs to the dethiobiotin synthetase family. As to quaternary structure, homodimer. Mg(2+) is required as a cofactor.

It localises to the cytoplasm. It catalyses the reaction (7R,8S)-7,8-diammoniononanoate + CO2 + ATP = (4R,5S)-dethiobiotin + ADP + phosphate + 3 H(+). It functions in the pathway cofactor biosynthesis; biotin biosynthesis; biotin from 7,8-diaminononanoate: step 1/2. In terms of biological role, catalyzes a mechanistically unusual reaction, the ATP-dependent insertion of CO2 between the N7 and N8 nitrogen atoms of 7,8-diaminopelargonic acid (DAPA, also called 7,8-diammoniononanoate) to form a ureido ring. The polypeptide is ATP-dependent dethiobiotin synthetase BioD (Xylella fastidiosa (strain M12)).